The chain runs to 1257 residues: Period circadian protein homolog 2 (1257 aa).

The segment at 1–59 is disordered; it reads MNGYVDFSPSPTSPTQEPGEPQPTQAVLQEDVDMSSGSSGNENCSTGRDSQGSDCDDSG. A compositionally biased stretch (low complexity) spans 8–25; that stretch reads SPSPTSPTQEPGEPQPTQ. Residues 35 to 53 show a composition bias toward polar residues; the sequence is SSGSSGNENCSTGRDSQGS. The Nuclear export signal 1 signature appears at 109-118; the sequence is LIRTLRELKV. The 68-residue stretch at 179–246 folds into the PAS 1 domain; the sequence is ITSEYIVKNS…FHSYTTPYKL (68 aa). Positions 306–310 match the LXXLL motif; the sequence is LCCLL. The PAS 2 domain maps to 319–385; the sequence is YEAPRIPPEK…MLAIHKKILQ (67 aa). A PAC domain is found at 393 to 436; it reads YSPIRFRTRNGEYITLDTSWSSFINPWSRKISFIIGRHKVRVGP. The Nuclear export signal 2 motif lies at 460-469; that stretch reads LTEQIHRLLM. Residues 471 to 567 form a disordered region; it reads PVPHSGSSGY…RDSSGASLPK (97 aa). The interval 478 to 482 is important for protein stability; that stretch reads SGYGS. Composition is skewed to polar residues over residues 493-504 and 518-528; these read MSQTSSSDSNGQ and SGKSQSKSHFS. Positions 510–709 are CSNK1E binding domain; it reads RRSGIFKTSG…DAAGGLSQEK (200 aa). 5 positions are modified to phosphoserine: S525, S528, S531, S538, and S544. Positions 541-555 are enriched in polar residues; it reads EMQSSPPAQVRSVTT. The residue at position 554 (T554) is a Phosphothreonine. 6 positions are modified to phosphoserine: S659, S693, S697, S706, S758, and S763. Disordered stretches follow at residues 678 to 706 and 757 to 833; these read DKKP…GGLS and RSRA…CPSA. The short motif at 778-794 is the Nuclear localization signal element; that stretch reads KKTGKNRKLKSKRVKTR. Residues 779–792 show a composition bias toward basic residues; the sequence is KTGKNRKLKSKRVK. Residues 821–832 show a composition bias toward low complexity; the sequence is SPSDTSQSSCPS. Residue T858 is modified to Phosphothreonine. The interval 882–1067 is interaction with PPARG; that stretch reads EFAVQPLPFA…DLCSATGSAL (186 aa). S939 carries the post-translational modification Phosphoserine. T964 is modified (phosphothreonine). Phosphoserine is present on S971. The short motif at 983-990 is the Nuclear export signal 3 element; sequence LQLNLLQL. The interval 993–1044 is disordered; sequence APESSTGAAGTLGTTGTAASGLDCTSGASRDRQPKAPPTCSEPSDTQNSDAI. Residues 996–1014 are compositionally biased toward low complexity; that stretch reads SSTGAAGTLGTTGTAASGL. The segment covering 1033 to 1044 has biased composition (polar residues); it reads SEPSDTQNSDAI. An LXXLL motif is present at residues 1051 to 1055; the sequence is LNLLL. A compositionally biased stretch (low complexity) spans 1070 to 1089; it reads SGASATSDSLGSSSLGCDTS. A disordered region spans residues 1070–1108; that stretch reads SGASATSDSLGSSSLGCDTSRSGAGSSDTSHTSKYFGSI. Positions 1090–1108 are enriched in polar residues; it reads RSGAGSSDTSHTSKYFGSI. The residue at position 1126 (S1126) is a Phosphoserine. The tract at residues 1157 to 1257 is CRY binding domain; that stretch reads SRDLQAVLKE…LANPRKEAQT (101 aa). The disordered stretch occupies residues 1226–1257; the sequence is EEDSPSLGLCDTSEAKEEESGQLANPRKEAQT.

In terms of assembly, homodimer. Component of the circadian core oscillator, which includes the CRY proteins, CLOCK or NPAS2, BMAL1 or BMAL2, CSNK1D and/or CSNK1E, TIMELESS, and the PER proteins. Interacts with CLOCK-BMAL1 (off DNA). Interacts directly with PER1 and PER3, and through a C-terminal domain, with CRY1 and CRY2. Interacts (via PAS 2 domain) with TIMELESS. Interacts with NFIL3. Different large complexes have been identified with different repressive functions. The core of PER complexes is composed of at least PER1, PER2, PER3, CRY1, CRY2, CSNK1D and/or CSNK1E. The large PER complex involved in the repression of transcriptional termination is composed of at least PER2, CDK9, DDX5, DHX9, NCBP1 and POLR2A (active). The large PER complex involved in the histone deacetylation is composed of at least HDAC1, PER2, SFPQ and SIN3A. The large PER complex involved in the histone methylation is composed of at least PER2, CBX3, TRIM28, SUV39H1 and/or SUV39H2; CBX3 mediates the formation of the complex. Interacts with SETX; the interaction inhibits termination of circadian target genes. Interacts with the nuclear receptors HNF4A, NR1D1, NR4A2, RORA, PPARA, PPARG and THRA; the interaction with at least PPARG is ligand dependent. Interacts with PML. Interacts (phosphorylated) with BTRC and FBXW11; the interactions trigger proteasomal degradation. Interacts with NONO and SFPQ. Interacts with CAVIN3. Interacts with MAGEL2. Interacts with MAP1LC3B. Interacts with HNF4A. In terms of processing, acetylated. Deacetylated by SIRT1, resulting in decreased protein stability. Deacetylated by SIRT6, preventing its degradation by the proteasome, resulting in increased protein stability. Phosphorylated by CSNK1E and CSNK1D. Phosphorylation results in PER2 protein degradation. May be dephosphorylated by PP1. Post-translationally, ubiquitinated, leading to its proteasomal degradation. Ubiquitination may be inhibited by CRY1. As to expression, expressed in all tissues examined including eye, brain, heart, lung, spleen, liver, pancreas and kidney. In the CNS, highly expressed in the SCN, internal granular layer of granular cells of the olfactory bulb, tuberculum olfactorium, piriform cortex, gyrus dentatus of the hippocampus, cerebellum, pars tuberalis/median eminence, and pituitary, and moderately in the tenia tecta, caudate putamen, accumbens nucleus, superior and inferior colliculus and pineal gland.

The protein localises to the nucleus. Its subcellular location is the cytoplasm. It is found in the perinuclear region. Transcriptional repressor which forms a core component of the circadian clock. The circadian clock, an internal time-keeping system, regulates various physiological processes through the generation of approximately 24 hour circadian rhythms in gene expression, which are translated into rhythms in metabolism and behavior. It is derived from the Latin roots 'circa' (about) and 'diem' (day) and acts as an important regulator of a wide array of physiological functions including metabolism, sleep, body temperature, blood pressure, endocrine, immune, cardiovascular, and renal function. Consists of two major components: the central clock, residing in the suprachiasmatic nucleus (SCN) of the brain, and the peripheral clocks that are present in nearly every tissue and organ system. Both the central and peripheral clocks can be reset by environmental cues, also known as Zeitgebers (German for 'timegivers'). The predominant Zeitgeber for the central clock is light, which is sensed by retina and signals directly to the SCN. The central clock entrains the peripheral clocks through neuronal and hormonal signals, body temperature and feeding-related cues, aligning all clocks with the external light/dark cycle. Circadian rhythms allow an organism to achieve temporal homeostasis with its environment at the molecular level by regulating gene expression to create a peak of protein expression once every 24 hours to control when a particular physiological process is most active with respect to the solar day. Transcription and translation of core clock components (CLOCK, NPAS2, BMAL1, BMAL2, PER1, PER2, PER3, CRY1 and CRY2) plays a critical role in rhythm generation, whereas delays imposed by post-translational modifications (PTMs) are important for determining the period (tau) of the rhythms (tau refers to the period of a rhythm and is the length, in time, of one complete cycle). A diurnal rhythm is synchronized with the day/night cycle, while the ultradian and infradian rhythms have a period shorter and longer than 24 hours, respectively. Disruptions in the circadian rhythms contribute to the pathology of cardiovascular diseases, cancer, metabolic syndrome and aging. A transcription/translation feedback loop (TTFL) forms the core of the molecular circadian clock mechanism. Transcription factors, CLOCK or NPAS2 and BMAL1 or BMAL2, form the positive limb of the feedback loop, act in the form of a heterodimer and activate the transcription of core clock genes and clock-controlled genes (involved in key metabolic processes), harboring E-box elements (5'-CACGTG-3') within their promoters. The core clock genes: PER1/2/3 and CRY1/2 which are transcriptional repressors form the negative limb of the feedback loop and interact with the CLOCK|NPAS2-BMAL1|BMAL2 heterodimer inhibiting its activity and thereby negatively regulating their own expression. This heterodimer also activates nuclear receptors NR1D1/2 and RORA/B/G, which form a second feedback loop and which activate and repress BMAL1 transcription, respectively. PER1 and PER2 proteins transport CRY1 and CRY2 into the nucleus with appropriate circadian timing, but also contribute directly to repression of clock-controlled target genes through interaction with several classes of RNA-binding proteins, helicases and others transcriptional repressors. PER appears to regulate circadian control of transcription by at least three different modes. First, interacts directly with the CLOCK-BMAL1 at the tail end of the nascent transcript peak to recruit complexes containing the SIN3-HDAC that remodel chromatin to repress transcription. Second, brings H3K9 methyltransferases such as SUV39H1 and SUV39H2 to the E-box elements of the circadian target genes, like PER2 itself or PER1. The recruitment of each repressive modifier to the DNA seems to be very precisely temporally orchestrated by the large PER complex, the deacetylases acting before than the methyltransferases. Additionally, large PER complexes are also recruited to the target genes 3' termination site through interactions with RNA-binding proteins and helicases that may play a role in transcription termination to regulate transcription independently of CLOCK-BMAL1 interactions. Recruitment of large PER complexes to the elongating polymerase at PER and CRY termination sites inhibited SETX action, impeding RNA polymerase II release and thereby repressing transcriptional reinitiation. May propagate clock information to metabolic pathways via the interaction with nuclear receptors. Coactivator of PPARA and corepressor of NR1D1, binds rhythmically at the promoter of nuclear receptors target genes like BMAL1 or G6PC1. Directly and specifically represses PPARG proadipogenic activity by blocking PPARG recruitment to target promoters and thereby transcriptional activation. Required for fatty acid and lipid metabolism, is involved as well in the regulation of circulating insulin levels. Plays an important role in the maintenance of cardiovascular functions through the regulation of NO and vasodilatatory prostaglandins production in aortas. Controls circadian glutamate uptake in synaptic vesicles through the regulation of VGLUT1 expression. May also be involved in the regulation of inflammatory processes. Represses the CLOCK-BMAL1 induced transcription of BHLHE40/DEC1 and ATF4. Negatively regulates the formation of the TIMELESS-CRY1 complex by competing with TIMELESS for binding to CRY1. The sequence is that of Period circadian protein homolog 2 from Rattus norvegicus (Rat).